Here is a 508-residue protein sequence, read N- to C-terminus: Light-independent protochlorophyllide reductase subunit B (508 aa).

D36 serves as a coordination point for [4Fe-4S] cluster. Catalysis depends on D294, which acts as the Proton donor. Residue G429–M430 coordinates substrate.

Belongs to the ChlB/BchB/BchZ family. Protochlorophyllide reductase is composed of three subunits; ChlL, ChlN and ChlB. Forms a heterotetramer of two ChlB and two ChlN subunits. [4Fe-4S] cluster is required as a cofactor.

It catalyses the reaction chlorophyllide a + oxidized 2[4Fe-4S]-[ferredoxin] + 2 ADP + 2 phosphate = protochlorophyllide a + reduced 2[4Fe-4S]-[ferredoxin] + 2 ATP + 2 H2O. The protein operates within porphyrin-containing compound metabolism; chlorophyll biosynthesis (light-independent). Component of the dark-operative protochlorophyllide reductase (DPOR) that uses Mg-ATP and reduced ferredoxin to reduce ring D of protochlorophyllide (Pchlide) to form chlorophyllide a (Chlide). This reaction is light-independent. The NB-protein (ChlN-ChlB) is the catalytic component of the complex. The protein is Light-independent protochlorophyllide reductase subunit B of Nostoc sp. (strain PCC 7120 / SAG 25.82 / UTEX 2576).